The primary structure comprises 1461 residues: DNA topoisomerase 2 (1461 aa).

A compositionally biased stretch (acidic residues) spans 1-17; it reads MSESESDYFTDGSEDDF. The tract at residues 1–61 is disordered; the sequence is MSESESDYFT…TPKPTNASET (61 aa). Residues 41–52 are compositionally biased toward low complexity; that stretch reads TNSTVSSSRSST. Residues N120, N149, 177-179, and 190-197 contribute to the ATP site; these read SSN and GRNGFGAK. Positions 382-389 are interaction with DNA; it reads SKKEKGKK. 418–420 serves as a coordination point for ATP; the sequence is QTK. One can recognise a Toprim domain in the interval 498–614; it reads CTLILTEGLS…GLLDIPGFLL (117 aa). Mg(2+) contacts are provided by E504, D583, and D585. The region spanning 752–1226 is the Topo IIA-type catalytic domain; that stretch reads IPSVLDGFKP…SAKDLWNQDL (475 aa). Y842 (O-(5'-phospho-DNA)-tyrosine intermediate) is an active-site residue. An interaction with DNA region spans residues 1024–1033; it reads KLVSSLSLAN. 2 disordered regions span residues 1122–1155 and 1244–1461; these read DGKP…DVGN and RESL…IVDE. Over residues 1133-1153 the composition is skewed to acidic residues; the sequence is LTGDDADEEEETQEQEGDEDV. The span at 1251–1261 shows a compositional bias: basic residues; sequence GKKKSTKRRAK. Basic and acidic residues-rich tracts occupy residues 1274–1283 and 1406–1417; these read VKVEPKEKKS and DKPEPKERRTRE. Positions 1434-1461 are enriched in acidic residues; the sequence is DSDDEDEDEEDDIVMSDGDDDDDFIVDE.

Belongs to the type II topoisomerase family. As to quaternary structure, homodimer. It depends on Mg(2+) as a cofactor. The cofactor is Mn(2+). Ca(2+) is required as a cofactor.

It localises to the nucleus. It catalyses the reaction ATP-dependent breakage, passage and rejoining of double-stranded DNA.. Its function is as follows. Control of topological states of DNA by transient breakage and subsequent rejoining of DNA strands. Topoisomerase II makes double-strand breaks. This Candida albicans (Yeast) protein is DNA topoisomerase 2 (TOP2).